Consider the following 76-residue polypeptide: UPF0291 protein BA_1897/GBAA_1897/BAS1759 (76 aa).

The protein belongs to the UPF0291 family.

Its subcellular location is the cytoplasm. In Bacillus anthracis, this protein is UPF0291 protein BA_1897/GBAA_1897/BAS1759.